The primary structure comprises 303 residues: MLLANAPHNGCSRLQQVTLLRASGAKLHRKRALTVVARTGTPQPRLPLSTQTSASLRAAREQAVLQSLLFAGPDQLLLGVLAGSRLGNGKGAAAVLEAELGGGDCDSVREWLNEQSGSTAAKLQGSGWLRPSDVEFSPAARRVLSLAEAGAEAMGSSSVGTYHLLLVLMGAGGEQQAVQAGAEVASTEQVDGSGMAANSRGSTSGSEQPPRDSDLGLLRSLLDVAGVDRTALEVKLLALAEAGAEMPPAQDSQATAAGVVATLTSVYRQQVARAWHERDDNAFRQAHQNTAMATGPDPDDEYE.

The transit peptide at 1 to 37 (MLLANAPHNGCSRLQQVTLLRASGAKLHRKRALTVVA) directs the protein to the chloroplast. Disordered regions lie at residues 185 to 214 (ASTE…RDSD) and 278 to 303 (RDDN…DEYE).

The protein belongs to the ClpA/ClpB family.

It is found in the plastid. Its subcellular location is the chloroplast. Its function is as follows. Accessory protein regulating the assembly of the plastid Clp protease system. The protein is ATP-dependent Clp protease ATP-binding subunit CLPT3, chloroplastic of Chlamydomonas reinhardtii (Chlamydomonas smithii).